The chain runs to 383 residues: Na(+)/H(+) antiporter NhaA (383 aa).

11 helical membrane-spanning segments follow: residues 19–39, 56–76, 92–112, 122–142, 151–171, 174–194, 212–232, 255–275, 292–312, 326–346, and 356–376; these read AGGVILMVTAALALVIANSPL, VLHGINDGLMAVFFLLVGLEI, ILPGLAALGGMVVPALVFLAL, GWAVPTATDIAFALGVLALLG, IFLTALAIIDDLGAVLVIALF, AKLSWPALVAVAAILALLAAL, LWGAMLQSGVHATVAGIALAL, VGYGIVPIFGFANAGVSFAGL, LLFGKQIGVFGTAWMAIWLGF, GVAVLCGIGFTMSLFIGALAF, and VKVGVLAGSALSAILGSLVLL.

Belongs to the NhaA Na(+)/H(+) (TC 2.A.33) antiporter family.

The protein localises to the cell inner membrane. It catalyses the reaction Na(+)(in) + 2 H(+)(out) = Na(+)(out) + 2 H(+)(in). Na(+)/H(+) antiporter that extrudes sodium in exchange for external protons. This is Na(+)/H(+) antiporter NhaA from Paramagnetospirillum magneticum (strain ATCC 700264 / AMB-1) (Magnetospirillum magneticum).